The primary structure comprises 94 residues: Large ribosomal subunit protein bL25 (94 aa).

Belongs to the bacterial ribosomal protein bL25 family. Part of the 50S ribosomal subunit; part of the 5S rRNA/L5/L18/L25 subcomplex. Contacts the 5S rRNA. Binds to the 5S rRNA independently of L5 and L18.

In terms of biological role, this is one of the proteins that binds to the 5S RNA in the ribosome where it forms part of the central protuberance. In Enterobacter sp. (strain 638), this protein is Large ribosomal subunit protein bL25.